The following is a 366-amino-acid chain: tRNA/tmRNA (uracil-C(5))-methyltransferase (366 aa).

S-adenosyl-L-methionine contacts are provided by Gln-189, Tyr-217, Asn-222, Glu-238, and Asp-298. The Nucleophile role is filled by Cys-323. Glu-357 (proton acceptor) is an active-site residue.

The protein belongs to the class I-like SAM-binding methyltransferase superfamily. RNA M5U methyltransferase family. TrmA subfamily.

It catalyses the reaction uridine(54) in tRNA + S-adenosyl-L-methionine = 5-methyluridine(54) in tRNA + S-adenosyl-L-homocysteine + H(+). It carries out the reaction uridine(341) in tmRNA + S-adenosyl-L-methionine = 5-methyluridine(341) in tmRNA + S-adenosyl-L-homocysteine + H(+). Functionally, dual-specificity methyltransferase that catalyzes the formation of 5-methyluridine at position 54 (m5U54) in all tRNAs, and that of position 341 (m5U341) in tmRNA (transfer-mRNA). This is tRNA/tmRNA (uracil-C(5))-methyltransferase from Photorhabdus laumondii subsp. laumondii (strain DSM 15139 / CIP 105565 / TT01) (Photorhabdus luminescens subsp. laumondii).